Reading from the N-terminus, the 179-residue chain is Prion-like protein doppel (179 aa).

Residues 1–25 (MKNRLGTWWVAILCMLLASHLSTVK) form the signal peptide. The tract at residues 27–50 (RGIKHRFKWNRKVLPSSGGQITEA) is flexible tail. A globular region spans residues 51 to 155 (RVAENRPGAF…KHCDFWLERG (105 aa)). 2 disulfides stabilise this stretch: cysteine 95/cysteine 148 and cysteine 109/cysteine 143. Residues asparagine 99 and asparagine 111 are each glycosylated (N-linked (GlcNAc...) asparagine). The interval 125–142 (KQDSKLHQRVLWRLIKEI) is cu(2+) binding. The GPI-anchor amidated glycine moiety is linked to residue glycine 155. The propeptide at 156-179 (AALRVAVDQPAMVCLLGFVWFIVK) is removed in mature form.

It belongs to the prion family. Post-translationally, N-glycosylated. N-glycosylated at two distinct sites. O-glycosylated. In terms of tissue distribution, detected in testis. Detected within seminiferous tubules, on round and elongated spermatids (at protein level). Not detected in brain (at protein level). Detected in testis, and at low levels in heart. Expression in brain is very low and barely detectable.

Its subcellular location is the cell membrane. Functionally, required for normal acrosome reaction and for normal male fertility. Can bind Cu(2+). The polypeptide is Prion-like protein doppel (Prnd) (Mus musculus (Mouse)).